A 136-amino-acid polypeptide reads, in one-letter code: Large ribosomal subunit protein uL16c (136 aa).

The protein belongs to the universal ribosomal protein uL16 family. In terms of assembly, part of the 50S ribosomal subunit.

The protein resides in the plastid. It is found in the chloroplast. In Buxus microphylla (Littleleaf boxwood), this protein is Large ribosomal subunit protein uL16c.